The primary structure comprises 147 residues: UPF0251 protein NT01CX_1491 (147 aa).

This sequence belongs to the UPF0251 family.

This chain is UPF0251 protein NT01CX_1491, found in Clostridium novyi (strain NT).